The sequence spans 188 residues: Pyridoxal 5'-phosphate synthase subunit PdxT (188 aa).

47–49 (GES) contributes to the L-glutamine binding site. Cysteine 79 serves as the catalytic Nucleophile. L-glutamine-binding positions include arginine 105 and 134 to 135 (IR). Residues histidine 170 and glutamate 172 each act as charge relay system in the active site.

Belongs to the glutaminase PdxT/SNO family. As to quaternary structure, in the presence of PdxS, forms a dodecamer of heterodimers. Only shows activity in the heterodimer.

It catalyses the reaction aldehydo-D-ribose 5-phosphate + D-glyceraldehyde 3-phosphate + L-glutamine = pyridoxal 5'-phosphate + L-glutamate + phosphate + 3 H2O + H(+). The catalysed reaction is L-glutamine + H2O = L-glutamate + NH4(+). It participates in cofactor biosynthesis; pyridoxal 5'-phosphate biosynthesis. Its function is as follows. Catalyzes the hydrolysis of glutamine to glutamate and ammonia as part of the biosynthesis of pyridoxal 5'-phosphate. The resulting ammonia molecule is channeled to the active site of PdxS. This Listeria monocytogenes serotype 4b (strain CLIP80459) protein is Pyridoxal 5'-phosphate synthase subunit PdxT.